A 355-amino-acid polypeptide reads, in one-letter code: RGG repeats nuclear RNA binding protein A (355 aa).

Ala-2 is modified (N-acetylalanine). The interval 26-225 (KIDKSKKSGQ…VEEKEPEDKE (200 aa)) is disordered. Low complexity predominate over residues 37-47 (SSLPAKSAPKL). 2 stretches are compositionally biased toward gly residues: residues 67–81 (RGGG…GRGG) and 114–141 (GGGA…SNEG). The Nuclear localization signal signature appears at 132–139 (GRRGGFSN). Over residues 143–168 (DGERPRRAFERRSGTGRGSDFKRDGS) the composition is skewed to basic and acidic residues. The Arginine-rich RNA-binding motif E-R-P-R-R-X-[F/Y]-[E/D]-R-R-S motif lies at 145–155 (ERPRRAFERRS). The span at 177–190 (GEEIAAETEAVAGV) shows a compositional bias: low complexity. Basic and acidic residues-rich tracts occupy residues 191–202 (ETEKDVGEKPAV) and 209–225 (ANKE…EDKE). The FF domain maps to 234-289 (ILEEKKKALQSLTTSERKVDTKVFESMQQLSNKKSNDEIFIKLGSDKDKRKDDKEE). Ser-268 carries the post-translational modification Phosphoserine. The span at 277 to 292 (GSDKDKRKDDKEEKAK) shows a compositional bias: basic and acidic residues. The segment at 277 to 355 (GSDKDKRKDD…AAQFPSLGGK (79 aa)) is disordered. Over residues 323-333 (GRGGVSSGESG) the composition is skewed to gly residues. Position 351 is a phosphoserine (Ser-351).

Belongs to the SERBP1-HABP4 family. Expressed in seedlings, leaves, roots, inflorescences, and siliques. Constitutively expressed in seedlings and roots.

The protein resides in the cytoplasm. It is found in the perinuclear region. It localises to the nucleus. Functionally, ribosome-binding protein that acts as a regulator of mRNA translation by promoting ribosome inactivation. Binds RNA. Regulates responses to abscisic acid (ABA). Promotes stomata closure in drought conditions. Involved in resistance to salt and drought stresses via the accumulation of Pro. The chain is RGG repeats nuclear RNA binding protein A from Arabidopsis thaliana (Mouse-ear cress).